The following is a 431-amino-acid chain: Trigger factor (431 aa).

Positions G165 to P250 constitute a PPIase FKBP-type domain.

This sequence belongs to the FKBP-type PPIase family. Tig subfamily.

It is found in the cytoplasm. It catalyses the reaction [protein]-peptidylproline (omega=180) = [protein]-peptidylproline (omega=0). Functionally, involved in protein export. Acts as a chaperone by maintaining the newly synthesized protein in an open conformation. Functions as a peptidyl-prolyl cis-trans isomerase. In Leuconostoc citreum (strain KM20), this protein is Trigger factor.